The primary structure comprises 153 residues: uncharacterized protein (153 aa).

Positions Leu-72–Ser-98 are disordered.

The protein localises to the cytoplasm. It is found in the nucleus. This is an uncharacterized protein from Schizosaccharomyces pombe (strain 972 / ATCC 24843) (Fission yeast).